Here is a 95-residue protein sequence, read N- to C-terminus: Pyrimidine/purine nucleoside phosphorylase (95 aa).

It belongs to the nucleoside phosphorylase PpnP family.

It carries out the reaction a purine D-ribonucleoside + phosphate = a purine nucleobase + alpha-D-ribose 1-phosphate. It catalyses the reaction adenosine + phosphate = alpha-D-ribose 1-phosphate + adenine. The enzyme catalyses cytidine + phosphate = cytosine + alpha-D-ribose 1-phosphate. The catalysed reaction is guanosine + phosphate = alpha-D-ribose 1-phosphate + guanine. It carries out the reaction inosine + phosphate = alpha-D-ribose 1-phosphate + hypoxanthine. It catalyses the reaction thymidine + phosphate = 2-deoxy-alpha-D-ribose 1-phosphate + thymine. The enzyme catalyses uridine + phosphate = alpha-D-ribose 1-phosphate + uracil. The catalysed reaction is xanthosine + phosphate = alpha-D-ribose 1-phosphate + xanthine. Its function is as follows. Catalyzes the phosphorolysis of diverse nucleosides, yielding D-ribose 1-phosphate and the respective free bases. Can use uridine, adenosine, guanosine, cytidine, thymidine, inosine and xanthosine as substrates. Also catalyzes the reverse reactions. The chain is Pyrimidine/purine nucleoside phosphorylase from Yersinia pestis bv. Antiqua (strain Antiqua).